We begin with the raw amino-acid sequence, 1088 residues long: RNA-directed RNA polymerase (1088 aa).

The RdRp catalytic domain maps to 501 to 687 (LSYGDVTRFL…AKRYIAGGKI (187 aa)).

This sequence belongs to the reoviridae RNA-directed RNA polymerase family. Interacts with VP3 (Potential). Interacts with VP2; this interaction activates VP1. Interacts with NSP5; this interaction is probably necessary for the formation of functional virus factories. Interacts with NSP2; this interaction is weak. The cofactor is Mg(2+).

The protein localises to the virion. It catalyses the reaction RNA(n) + a ribonucleoside 5'-triphosphate = RNA(n+1) + diphosphate. In terms of biological role, RNA-directed RNA polymerase that is involved in both transcription and genome replication. Together with VP3 capping enzyme, forms an enzyme complex positioned near the channels situated at each of the five-fold vertices of the core. Following infection, the outermost layer of the virus is lost, leaving a double-layered particle (DLP) made up of the core and VP6 shell. VP1 then catalyzes the transcription of fully conservative plus-strand genomic RNAs that are extruded through the DLP's channels into the cytoplasm where they function as mRNAs for translation of viral proteins. One copy of each of the viral (+)RNAs is also recruited during core assembly, together with newly synthesized polymerase complexes and VP2. The polymerase of these novo-formed particles catalyzes the synthesis of complementary minus-strands leading to dsRNA formation. To do so, the polymerase specifically recognizes and binds 4 bases 5'-UGUG-3' in the conserved 3'-sequence of plus-strand RNA templates. VP2 presumably activates the autoinhibited VP1-RNA complex to coordinate packaging and genome replication. Once dsRNA synthesis is complete, the polymerase switches to the transcriptional mode, thus providing secondary transcription. The protein is RNA-directed RNA polymerase of Homo sapiens (Human).